Here is a 308-residue protein sequence, read N- to C-terminus: D-alanine--D-alanine ligase (308 aa).

Positions 109–302 (KAAYAAAGLP…FGALCRWIVE (194 aa)) constitute an ATP-grasp domain. Position 136-186 (136-186 (MPPPYVIKPYNEGSSVGVYLVPEGAEAAPELADDLPDTLMVEAFVPGRELT)) interacts with ATP. Mg(2+) contacts are provided by D253, E269, and N271.

This sequence belongs to the D-alanine--D-alanine ligase family. It depends on Mg(2+) as a cofactor. Requires Mn(2+) as cofactor.

Its subcellular location is the cytoplasm. The enzyme catalyses 2 D-alanine + ATP = D-alanyl-D-alanine + ADP + phosphate + H(+). Its pathway is cell wall biogenesis; peptidoglycan biosynthesis. In terms of biological role, cell wall formation. This Dinoroseobacter shibae (strain DSM 16493 / NCIMB 14021 / DFL 12) protein is D-alanine--D-alanine ligase.